A 145-amino-acid chain; its full sequence is Maximins 5/H4 type 2 (145 aa).

Residues 1 to 18 (MNFKYIVAVSFLIASAYA) form the signal peptide. 2 consecutive propeptides follow at residues 19–43 (RSVQ…REIR) and 74–124 (TAEE…KEKR). Residue leucine 144 is modified to Leucine amide.

This sequence belongs to the bombinin family. Expressed by the skin glands.

It is found in the secreted. In terms of biological role, maximin-5 shows antibacterial activity against both Gram-positive and Gram-negative bacteria. The only exception is the resistance of E.coli. Also shows antimicrobial activity against fungi C.albicans, A.flavus and P.uticale. It has little hemolytic activity. It does not possess a significant cytotoxicity against tumor cell lines. It does not possess a significant anti-HIV activity. Its function is as follows. Maximin-H4 shows antibacterial activity against both Gram-positive and Gram-negative bacteria. It also shows antimicrobial activity against the fungus C.albicans. Shows strong hemolytic activity. The sequence is that of Maximins 5/H4 type 2 from Bombina maxima (Giant fire-bellied toad).